Consider the following 69-residue polypeptide: FMRFamide-like neuropeptides 24 (69 aa).

The N-terminal stretch at 1 to 25 (MLSSRTSSIILILAILVAIMAVAQC) is a signal peptide. A propeptide spanning residues 26-51 (RNIQYDVEEMTPEAAFRYAQWGEIPH) is cleaved from the precursor. A Phenylalanine amide modification is found at phenylalanine 64. The propeptide occupies 68–69 (SI).

The protein belongs to the FARP (FMRFamide related peptide) family.

The protein resides in the secreted. Probable FMRFamide-like neuropeptides. Plays a role in behaviors associated with a sleep-like state induced by stress (SIS), acting in concert with the FMRFamide related peptide flp-13 and neuropeptide-like protein nlp-8. This chain is FMRFamide-like neuropeptides 24, found in Caenorhabditis elegans.